The following is a 97-amino-acid chain: Putative ankyrin repeat protein RBE_0357 (97 aa).

An ANK repeat occupies 24 to 54 (YGKTALHYAYTKRNIDIIKILLKCPGIKICI).

The chain is Putative ankyrin repeat protein RBE_0357 from Rickettsia bellii (strain RML369-C).